The following is a 75-amino-acid chain: Conotoxin ar11a (75 aa).

The signal sequence occupies residues 1–19 (MKLCATFLLVLVTLPLVTG). Positions 20–36 (EKSSERSLSGAILRGVR) are excised as a propeptide. 4 disulfide bridges follow: cysteine 39-cysteine 53, cysteine 46-cysteine 58, cysteine 52-cysteine 63, and cysteine 57-cysteine 70.

In terms of tissue distribution, expressed by the venom duct.

The protein resides in the secreted. In terms of biological role, both natural (L-Leu form) and synthetic (D-Leu from) peptides equally cause sensitivity to touch and body tremor. Neither L-Leu form nor D-Leu form is active on nerve-muscle preparation. The chain is Conotoxin ar11a from Conus arenatus (Sand-dusted cone).